The chain runs to 101 residues: Urease subunit beta (101 aa).

This sequence belongs to the urease beta subunit family. In terms of assembly, heterotrimer of UreA (gamma), UreB (beta) and UreC (alpha) subunits. Three heterotrimers associate to form the active enzyme.

It is found in the cytoplasm. The catalysed reaction is urea + 2 H2O + H(+) = hydrogencarbonate + 2 NH4(+). Its pathway is nitrogen metabolism; urea degradation; CO(2) and NH(3) from urea (urease route): step 1/1. This chain is Urease subunit beta, found in Ectopseudomonas mendocina (strain ymp) (Pseudomonas mendocina).